The primary structure comprises 173 residues: Dirigent protein 8 (173 aa).

The N-terminal stretch at 1 to 22 (MTNLILIFAAQILLFYAVASVG) is a signal peptide. Residues Asn69, Asn90, and Asn125 are each glycosylated (N-linked (GlcNAc...) asparagine).

Belongs to the plant dirigent protein family. Homodimer.

Its subcellular location is the secreted. The protein localises to the extracellular space. It is found in the apoplast. Dirigent proteins impart stereoselectivity on the phenoxy radical-coupling reaction, yielding optically active lignans from two molecules of coniferyl alcohol in the biosynthesis of lignans, flavonolignans, and alkaloids and thus plays a central role in plant secondary metabolism. This Arabidopsis thaliana (Mouse-ear cress) protein is Dirigent protein 8 (DIR8).